The following is an 86-amino-acid chain: Small ribosomal subunit protein bS16 (86 aa).

The protein belongs to the bacterial ribosomal protein bS16 family.

The chain is Small ribosomal subunit protein bS16 from Stenotrophomonas maltophilia (strain R551-3).